The primary structure comprises 259 residues: L-arginine-binding protein (259 aa).

The signal sequence occupies residues 1-21 (MKKLALLGALALSVLSLPTFA).

Belongs to the bacterial solute-binding protein 3 family.

Its subcellular location is the periplasm. In terms of biological role, binds L-arginine with high affinity. Shows no measurable affinity for L-ornithine. The sequence is that of L-arginine-binding protein from Pseudomonas aeruginosa (strain ATCC 15692 / DSM 22644 / CIP 104116 / JCM 14847 / LMG 12228 / 1C / PRS 101 / PAO1).